Consider the following 872-residue polypeptide: Alanine--tRNA ligase (872 aa).

Positions 567, 571, 669, and 673 each coordinate Zn(2+).

The protein belongs to the class-II aminoacyl-tRNA synthetase family. Zn(2+) serves as cofactor.

The protein localises to the cytoplasm. It carries out the reaction tRNA(Ala) + L-alanine + ATP = L-alanyl-tRNA(Ala) + AMP + diphosphate. Functionally, catalyzes the attachment of alanine to tRNA(Ala) in a two-step reaction: alanine is first activated by ATP to form Ala-AMP and then transferred to the acceptor end of tRNA(Ala). Also edits incorrectly charged Ser-tRNA(Ala) and Gly-tRNA(Ala) via its editing domain. The protein is Alanine--tRNA ligase of Streptococcus pneumoniae (strain Hungary19A-6).